Reading from the N-terminus, the 370-residue chain is Queuine tRNA-ribosyltransferase (370 aa).

Asp-89 acts as the Proton acceptor in catalysis. Residues 89–93 (DSGGF), Asp-143, Gln-187, and Gly-214 contribute to the substrate site. The segment at 245 to 251 (GVGKPED) is RNA binding. Asp-264 acts as the Nucleophile in catalysis. The tract at residues 269–273 (TRNAR) is RNA binding; important for wobble base 34 recognition. 4 residues coordinate Zn(2+): Cys-302, Cys-304, Cys-307, and His-333.

It belongs to the queuine tRNA-ribosyltransferase family. As to quaternary structure, homodimer. Within each dimer, one monomer is responsible for RNA recognition and catalysis, while the other monomer binds to the replacement base PreQ1. Zn(2+) is required as a cofactor.

The enzyme catalyses 7-aminomethyl-7-carbaguanine + guanosine(34) in tRNA = 7-aminomethyl-7-carbaguanosine(34) in tRNA + guanine. Its pathway is tRNA modification; tRNA-queuosine biosynthesis. In terms of biological role, catalyzes the base-exchange of a guanine (G) residue with the queuine precursor 7-aminomethyl-7-deazaguanine (PreQ1) at position 34 (anticodon wobble position) in tRNAs with GU(N) anticodons (tRNA-Asp, -Asn, -His and -Tyr). Catalysis occurs through a double-displacement mechanism. The nucleophile active site attacks the C1' of nucleotide 34 to detach the guanine base from the RNA, forming a covalent enzyme-RNA intermediate. The proton acceptor active site deprotonates the incoming PreQ1, allowing a nucleophilic attack on the C1' of the ribose to form the product. After dissociation, two additional enzymatic reactions on the tRNA convert PreQ1 to queuine (Q), resulting in the hypermodified nucleoside queuosine (7-(((4,5-cis-dihydroxy-2-cyclopenten-1-yl)amino)methyl)-7-deazaguanosine). The protein is Queuine tRNA-ribosyltransferase of Baumannia cicadellinicola subsp. Homalodisca coagulata.